A 214-amino-acid chain; its full sequence is ATP-dependent Clp protease proteolytic subunit 2 (214 aa).

S110 (nucleophile) is an active-site residue. H135 is an active-site residue.

This sequence belongs to the peptidase S14 family. Fourteen ClpP subunits assemble into 2 heptameric rings which stack back to back to give a disk-like structure with a central cavity, resembling the structure of eukaryotic proteasomes.

The protein resides in the cytoplasm. It catalyses the reaction Hydrolysis of proteins to small peptides in the presence of ATP and magnesium. alpha-casein is the usual test substrate. In the absence of ATP, only oligopeptides shorter than five residues are hydrolyzed (such as succinyl-Leu-Tyr-|-NHMec, and Leu-Tyr-Leu-|-Tyr-Trp, in which cleavage of the -Tyr-|-Leu- and -Tyr-|-Trp bonds also occurs).. Its function is as follows. Cleaves peptides in various proteins in a process that requires ATP hydrolysis. Has a chymotrypsin-like activity. Plays a major role in the degradation of misfolded proteins. The protein is ATP-dependent Clp protease proteolytic subunit 2 of Mycobacterium leprae (strain TN).